A 566-amino-acid polypeptide reads, in one-letter code: Insulinoma-associated protein 2 (566 aa).

The segment at methionine 1–arginine 20 is SNAG domain. The interval glutamine 32–glycine 117 is disordered. Pro residues predominate over residues glycine 103 to alanine 113. A C2H2-type 1; atypical zinc finger spans residues phenylalanine 263–cysteine 283. The C2H2-type 2 zinc finger occupies tyrosine 291 to histidine 313. The interval arginine 310–serine 418 is disordered. The span at alanine 318–serine 348 shows a compositional bias: low complexity. Residues glutamate 352 to alanine 369 show a composition bias toward basic and acidic residues. 3 consecutive C2H2-type zinc fingers follow at residues phenylalanine 426–histidine 448, phenylalanine 470–histidine 492, and phenylalanine 525–histidine 548.

Expressed in heart, liver, skeletal muscle, kidney and pancreas, and, to a lesser extent, in brain, lung and spleen. In the pancreas, expressed in islet cells, including insulin- and glucagon-producing alpha- and beta-cells, but not in acinar cells (at protein level). Detected in adrenal glands, particularly in the deeper layer of the cortex (at protein level).

It is found in the cytoplasm. The protein localises to the nucleus. Its function is as follows. May function as a growth suppressor or tumor suppressor in liver cells and in certain neurons. This chain is Insulinoma-associated protein 2 (INSM2), found in Homo sapiens (Human).